The chain runs to 841 residues: Envelope glycoprotein H (841 aa).

Residues 1–17 form the signal peptide; the sequence is MFALVLAVVILPLWTTA. 3 N-linked (GlcNAc...) asparagine; by host glycosylation sites follow: N18, N45, and N217. The Virion surface portion of the chain corresponds to 18–802; that stretch reads NKSYVTPTPA…ERRQAIRMSG (785 aa). The segment at 246 to 309 is interaction with gL; sequence DSGRVEVNIG…DPGPSYRVYL (64 aa). N317, N499, N522, N760, and N783 each carry an N-linked (GlcNAc...) asparagine; by host glycan. Residues 803–823 form a helical membrane-spanning segment; sequence QYLGASLGGAFLAVVGFGIIG. Topologically, residues 824–841 are intravirion; the sequence is WMLCGNSRLREYNKIPLT.

This sequence belongs to the herpesviridae glycoprotein H family. Interacts with glycoprotein L (gL); this interaction is necessary for the correct processing and cell surface expression of gH. The heterodimer gH/gL seems to interact with gB trimers during fusion. Post-translationally, N-glycosylated, O-glycosylated, and sialylated.

The protein resides in the virion membrane. It is found in the host cell membrane. It localises to the host endosome membrane. Functionally, the heterodimer glycoprotein H-glycoprotein L is required for the fusion of viral and plasma membranes leading to virus entry into the host cell. Following initial binding to host receptor, membrane fusion is mediated by the fusion machinery composed of gB and the heterodimer gH/gL. May also be involved in the fusion between the virion envelope and the outer nuclear membrane during virion morphogenesis. The sequence is that of Envelope glycoprotein H from Varicella-zoster virus (strain Dumas) (HHV-3).